The sequence spans 114 residues: Probable acid stress chaperone HdeA (114 aa).

The first 26 residues, 1 to 26 (MIKALFNKNTALAAVTILALSGGAMA), serve as a signal peptide directing secretion. Cysteines 46 and 94 form a disulfide.

Belongs to the HdeA family.

It is found in the periplasm. Required for optimal acid stress protection. Exhibits a chaperone-like activity only at low pH by suppressing non-specifically the aggregation of denaturated periplasmic proteins. This chain is Probable acid stress chaperone HdeA, found in Brucella suis biovar 1 (strain 1330).